We begin with the raw amino-acid sequence, 340 residues long: NADH-quinone oxidoreductase subunit H (340 aa).

Transmembrane regions (helical) follow at residues 4–24, 78–98, 113–133, 151–171, 184–204, 244–264, 273–293, and 316–336; these read TIGI…PLLL, YLFV…WAVI, VLYL…AGWA, VSYE…AGSM, MLHW…IAGI, SMIL…LSPF, IFFV…FLFV, and VLIP…VAHV.

It belongs to the complex I subunit 1 family. NDH-1 is composed of 14 different subunits. Subunits NuoA, H, J, K, L, M, N constitute the membrane sector of the complex.

Its subcellular location is the cell inner membrane. It carries out the reaction a quinone + NADH + 5 H(+)(in) = a quinol + NAD(+) + 4 H(+)(out). Its function is as follows. NDH-1 shuttles electrons from NADH, via FMN and iron-sulfur (Fe-S) centers, to quinones in the respiratory chain. The immediate electron acceptor for the enzyme in this species is believed to be ubiquinone. Couples the redox reaction to proton translocation (for every two electrons transferred, four hydrogen ions are translocated across the cytoplasmic membrane), and thus conserves the redox energy in a proton gradient. This subunit may bind ubiquinone. In Legionella pneumophila (strain Paris), this protein is NADH-quinone oxidoreductase subunit H.